Consider the following 159-residue polypeptide: Succinate dehydrogenase [ubiquinone] cytochrome b small subunit, mitochondrial (159 aa).

The N-terminal 56 residues, 1–56 (MAVLWRLSAVCGAQGGRALLLRTPVVRPAHISAFLQDRPIPEWCGVQHIHLSPGHH), are a transit peptide targeting the mitochondrion. The Mitochondrial matrix segment spans residues 57–63 (SGSKAAS). The helical transmembrane segment at 64–85 (LHWTSERVVSVLLLGLLPAAYL) threads the bilayer. Residues 86 to 90 (NPCSA) are Mitochondrial intermembrane-facing. The helical transmembrane segment at 91 to 111 (MDYSLAATLTLHGHWGLGQVV) threads the bilayer. His-102 is a heme b binding site. At 112–120 (TDYVHGDAS) the chain is on the mitochondrial matrix side. A ubiquinone is bound at residue Tyr-114. A helical membrane pass occupies residues 121–142 (QKAAKAGLLALSALTFAGLCYF). At 143–159 (NYHDVGICKAVAMLWKL) the chain is on the mitochondrial intermembrane side.

Belongs to the CybS family. As to quaternary structure, component of complex II composed of four subunits: the flavoprotein (FP) SDHA, iron-sulfur protein (IP) SDHB, and a cytochrome b560 composed of SDHC and SDHD.

It localises to the mitochondrion inner membrane. It functions in the pathway carbohydrate metabolism; tricarboxylic acid cycle. Its function is as follows. Membrane-anchoring subunit of succinate dehydrogenase (SDH) that is involved in complex II of the mitochondrial electron transport chain and is responsible for transferring electrons from succinate to ubiquinone (coenzyme Q). SDH also oxidizes malate to the non-canonical enol form of oxaloacetate, enol-oxaloacetate. Enol-oxaloacetate, which is a potent inhibitor of the succinate dehydrogenase activity, is further isomerized into keto-oxaloacetate. This Pongo abelii (Sumatran orangutan) protein is Succinate dehydrogenase [ubiquinone] cytochrome b small subunit, mitochondrial (SDHD).